Here is a 153-residue protein sequence, read N- to C-terminus: Glycosylation-dependent cell adhesion molecule 1 (153 aa).

The first 18 residues, 1–18, serve as a signal peptide directing secretion; the sequence is MKFLCVLLLASLAATSLA. O-linked (GalNAc...) threonine; partial glycosylation is present at Thr-34. Phosphoserine is present on residues Ser-47, Ser-52, Ser-56, Ser-58, and Ser-64. Ser-78 is a glycosylation site (O-linked (HexNAc...) serine). Residue Asn-95 is glycosylated (N-linked (GlcNAc...) asparagine). Positions 95–115 are disordered; the sequence is NATLGSEETTEHTPSDASTTE. O-linked (GalNAc...) threonine glycosylation is present at Thr-104.

This sequence belongs to the PP3/GlyCAM-1 family. As to expression, highly and specifically expressed in the lactating mammary gland.

The protein resides in the membrane. In Bos taurus (Bovine), this protein is Glycosylation-dependent cell adhesion molecule 1 (GLYCAM1).